Consider the following 379-residue polypeptide: Chaperone protein DnaJ (379 aa).

One can recognise a J domain in the interval 5-70 (DYYELLEVSR…QKRAAYDQFG (66 aa)). The CR-type zinc-finger motif lies at 135 to 213 (GKEVEITVPR…CHGQGRVRES (79 aa)). Residues C148, C151, C165, C168, C187, C190, C201, and C204 each contribute to the Zn(2+) site. 4 CXXCXGXG motif repeats span residues 148–155 (CTVCEGSG), 165–172 (CETCQGMG), 187–194 (CPTCHGEG), and 201–208 (CASCHGQG).

Belongs to the DnaJ family. In terms of assembly, homodimer. It depends on Zn(2+) as a cofactor.

It is found in the cytoplasm. In terms of biological role, participates actively in the response to hyperosmotic and heat shock by preventing the aggregation of stress-denatured proteins and by disaggregating proteins, also in an autonomous, DnaK-independent fashion. Unfolded proteins bind initially to DnaJ; upon interaction with the DnaJ-bound protein, DnaK hydrolyzes its bound ATP, resulting in the formation of a stable complex. GrpE releases ADP from DnaK; ATP binding to DnaK triggers the release of the substrate protein, thus completing the reaction cycle. Several rounds of ATP-dependent interactions between DnaJ, DnaK and GrpE are required for fully efficient folding. Also involved, together with DnaK and GrpE, in the DNA replication of plasmids through activation of initiation proteins. The chain is Chaperone protein DnaJ from Legionella pneumophila (strain Corby).